Consider the following 892-residue polypeptide: Protein BNI4 (892 aa).

2 positions are modified to phosphoserine: Ser43 and Ser133. Disordered stretches follow at residues 185–287 (DFLS…EDTS) and 305–387 (KPVI…QDTE). A compositionally biased stretch (basic and acidic residues) spans 208–223 (TILERDNNLPVKREEN). 2 stretches are compositionally biased toward polar residues: residues 224 to 236 (TIIN…TTHS) and 270 to 280 (DSSAQRTTSAG). At Ser281 the chain carries Phosphoserine. Positions 309 to 335 (GNNSVTNEKNKMSSSSTFSMNIQTSLK) are enriched in polar residues. Residues 346–356 (SSSSIFNSFLK) show a composition bias toward low complexity. Residues 357 to 371 (GKIETSDSPRKEPMR) show a composition bias toward basic and acidic residues. Phosphoserine occurs at positions 364 and 394. The residue at position 410 (Thr410) is a Phosphothreonine. Ser476, Ser500, and Ser503 each carry phosphoserine. Disordered regions lie at residues 506–526 (RTRS…RSLT), 618–644 (SDEE…SERQ), and 685–734 (YATE…GDER). Position 618 is a phosphoserine (Ser618). Positions 624-643 (EVERDVPKPREEPLKKDSER) are enriched in basic and acidic residues. Thr703 is subject to Phosphothreonine. Over residues 707-719 (RNNKEDSYKERET) the composition is skewed to basic and acidic residues. Phosphoserine occurs at positions 746 and 825.

May interact with CHS3 and seems to be an adapter (along with SKT5) to link CHS3 to septins.

In Saccharomyces cerevisiae (strain ATCC 204508 / S288c) (Baker's yeast), this protein is Protein BNI4 (BNI4).